Reading from the N-terminus, the 529-residue chain is UDP-glucuronosyltransferase 2B33 (529 aa).

A signal peptide spans 1–24 (MSVKWTSIILLIQLSFYFSSGSCG). 2 N-linked (GlcNAc...) asparagine glycosylation sites follow: N67 and N68. The chain crosses the membrane as a helical span at residues 494–514 (IGFLLACVATVIFIIMKCCLF).

The protein belongs to the UDP-glycosyltransferase family.

The protein resides in the microsome membrane. The protein localises to the endoplasmic reticulum membrane. The enzyme catalyses glucuronate acceptor + UDP-alpha-D-glucuronate = acceptor beta-D-glucuronoside + UDP + H(+). Functionally, UDPGTs are of major importance in the conjugation and subsequent elimination of potentially toxic xenobiotics and endogenous compounds. This isozyme has glucuronidating capacity on estriol and does not catalyze the glucuronidation of beta-estradiol. Capable of conjugating 4-hydroxyestrone, androsterone, diclofenac, and hyodeoxycholic acid. The protein is UDP-glucuronosyltransferase 2B33 (UGT2B33) of Macaca mulatta (Rhesus macaque).